The primary structure comprises 283 residues: Extracellular metalloprotease MGG_08041 (283 aa).

Residues 1 to 22 (MQINVVKTFLFALAASSVSALA) form the signal peptide. The N-linked (GlcNAc...) asparagine glycan is linked to Asn-55. His-197 contacts Zn(2+). Glu-198 is an active-site residue. His-201 is a binding site for Zn(2+). Cys-233 and Cys-260 are oxidised to a cystine.

The protein belongs to the peptidase M43B family.

It is found in the secreted. In terms of biological role, secreted metalloproteinase that allows assimilation of proteinaceous substrates. In Pyricularia oryzae (strain 70-15 / ATCC MYA-4617 / FGSC 8958) (Rice blast fungus), this protein is Extracellular metalloprotease MGG_08041.